Here is a 166-residue protein sequence, read N- to C-terminus: Short form salivary protein D7R5 (166 aa).

Positions M1 to A22 are cleaved as a signal peptide. Disulfide bonds link C26/C58, C39/C166, and C98/C117.

It belongs to the PBP/GOBP family.

It localises to the secreted. Its function is as follows. In contrast to the related D7 salivary proteins, does not bind biogenic amines such as serotonin, noradrenaline, histamine and adrenaline. It is hypothesized that either D7r5 evolved an as yet unknown function or is becoming a pseudogene. The polypeptide is Short form salivary protein D7R5 (Anopheles gambiae (African malaria mosquito)).